Consider the following 559-residue polypeptide: Potassium-transporting ATPase potassium-binding subunit (559 aa).

12 consecutive transmembrane segments (helical) span residues 5 to 25, 63 to 83, 131 to 151, 173 to 193, 254 to 274, 282 to 302, 327 to 347, 356 to 376, 379 to 399, 416 to 436, 483 to 503, and 525 to 545; these read GFLL…PLGM, LLAI…LLML, VGLT…VFAL, ITLW…IQQG, VQML…GEVV, AILW…MWAE, FGIL…CGAV, ALGG…FGGV, GLYG…LMVG, MIAL…ALAM, LLLA…VMAI, and ALFI…TFIP.

Belongs to the KdpA family. The system is composed of three essential subunits: KdpA, KdpB and KdpC.

The protein localises to the cell inner membrane. In terms of biological role, part of the high-affinity ATP-driven potassium transport (or Kdp) system, which catalyzes the hydrolysis of ATP coupled with the electrogenic transport of potassium into the cytoplasm. This subunit binds the periplasmic potassium ions and delivers the ions to the membrane domain of KdpB through an intramembrane tunnel. The sequence is that of Potassium-transporting ATPase potassium-binding subunit from Klebsiella pneumoniae subsp. pneumoniae (strain ATCC 700721 / MGH 78578).